Here is a 2360-residue protein sequence, read N- to C-terminus: Protein Ycf2 (2360 aa).

Disordered regions lie at residues 172–193 (SSQLKGSSDQSRDHFDSIGTED), 225–255 (TEIESDRFSKGLSGSSSKSRLFTEGEKEMNN), and 944–995 (KRKK…KRKE). Low complexity predominate over residues 234-244 (KGLSGSSSKSR). Residues 245–254 (LFTEGEKEMN) show a composition bias toward basic and acidic residues. The segment covering 944–959 (KRKKKKPEKRKKKKPE) has biased composition (basic residues). Positions 960–993 (KRKEKKPEKRKEKKPEKRKEKKPEKRKEKKPEKR) are enriched in basic and acidic residues. 1425 to 1432 (GSIGSGRS) lines the ATP pocket. Disordered regions lie at residues 1499–1518 (YEDRDSDDYEPGASDDYEPG), 1843–2031 (LVGS…LLRP), and 2098–2214 (PAEE…DGFS). Acidic residues predominate over residues 1849 to 2011 (TEEEVEGTEE…VEGTEDEEVE (163 aa)). Residues 2012–2024 (GTEKDSSQFDNDR) are compositionally biased toward basic and acidic residues. Composition is skewed to acidic residues over residues 2098–2115 (PAEEIPEEEDPLPEEALE) and 2122–2197 (GEEE…ENDS).

This sequence belongs to the Ycf2 family.

The protein resides in the plastid. It localises to the chloroplast stroma. Probable ATPase of unknown function. Its presence in a non-photosynthetic plant (Epifagus virginiana) and experiments in tobacco indicate that it has an essential function which is probably not related to photosynthesis. This Oenothera argillicola (Appalachian evening primrose) protein is Protein Ycf2.